The primary structure comprises 647 residues: DNA mismatch repair protein MutL (647 aa).

The segment covering 387–400 has biased composition (basic and acidic residues); sequence SAKPVHEATDEKAE. Residues 387 to 412 form a disordered region; the sequence is SAKPVHEATDEKAEPQSTSVKFAERK.

The protein belongs to the DNA mismatch repair MutL/HexB family.

In terms of biological role, this protein is involved in the repair of mismatches in DNA. It is required for dam-dependent methyl-directed DNA mismatch repair. May act as a 'molecular matchmaker', a protein that promotes the formation of a stable complex between two or more DNA-binding proteins in an ATP-dependent manner without itself being part of a final effector complex. This is DNA mismatch repair protein MutL from Streptococcus sanguinis (strain SK36).